A 377-amino-acid chain; its full sequence is MDMEIDDPMHGSDEDQLSPTLDEDMNSDDGKNNTKARSNDEDTDEELEDFNFKPGSSGIADHKSSKPLKLTNTNINQLDQWIEHLSKCEPLSEDDVARLCKMAVDVLQFEENVKPINVPVTICGDVHGQFHDLLELFKIGGPCPDTNYLFMGDYVDRGYYSVETVSYLVAMKVRYPHRITILRGNHESRQITQVYGFYDECLRKYGSANVWKMFTDLFDYFPVTALVDNKIFCLHGGLSPMIETIDQVRDLNRIQEVPHEGPMCDLLWSDPDDRGGWGISPRGAGFTFGQDISEQFNHTNDLSLIARAHQLVMEGYSWSHQQNVVTIFSAPNYCYRCGNQAAIMEVDENHNRQFLQYDPSVRPGEPTVTRKTPDYFL.

The tract at residues 1-66 (MDMEIDDPMH…SGIADHKSSK (66 aa)) is disordered. A compositionally biased stretch (basic and acidic residues) spans 28–40 (DDGKNNTKARSND). Ser-38 bears the Phosphoserine mark. Thr-43 bears the Phosphothreonine mark. Mn(2+) is bound by residues Asp-125, His-127, Asp-153, and Asn-185. His-186 serves as the catalytic Proton donor. Residues His-235 and His-309 each contribute to the Mn(2+) site. Leu-377 bears the Leucine methyl ester mark.

It belongs to the PPP phosphatase family. PP-2A subfamily. As to quaternary structure, inactivated in a complex with phosphatase methylesterase PPE1 (PP2Ai). Interacts with phosphatase 2A activator RRD2, which can reactivate PP2Ai by dissociating the catalytic subunit from the complex. Interacts with TAP42. Mn(2+) is required as a cofactor. Reversibly methyl esterified on Leu-377 by leucine carboxyl methyltransferase 1 (PPM1) and protein phosphatase methylesterase 1 (PPE1). Carboxyl methylation influences the affinity of the catalytic subunit for the different regulatory subunits, thereby modulating the PP2A holoenzyme's substrate specificity, enzyme activity and cellular localization.

The enzyme catalyses O-phospho-L-seryl-[protein] + H2O = L-seryl-[protein] + phosphate. It carries out the reaction O-phospho-L-threonyl-[protein] + H2O = L-threonyl-[protein] + phosphate. In terms of biological role, exact function not known, phosphatase 2A performs an essential cellular function. The polypeptide is Serine/threonine-protein phosphatase PP2A-2 catalytic subunit (PPH22) (Saccharomyces cerevisiae (strain ATCC 204508 / S288c) (Baker's yeast)).